The primary structure comprises 168 residues: UPF0178 protein RBAM_023530 (168 aa).

It belongs to the UPF0178 family.

The polypeptide is UPF0178 protein RBAM_023530 (Bacillus velezensis (strain DSM 23117 / BGSC 10A6 / LMG 26770 / FZB42) (Bacillus amyloliquefaciens subsp. plantarum)).